The following is a 316-amino-acid chain: 4-hydroxy-3-methylbut-2-enyl diphosphate reductase (316 aa).

C12 serves as a coordination point for [4Fe-4S] cluster. 2 residues coordinate (2E)-4-hydroxy-3-methylbut-2-enyl diphosphate: H41 and H74. The dimethylallyl diphosphate site is built by H41 and H74. Positions 41 and 74 each coordinate isopentenyl diphosphate. C96 is a [4Fe-4S] cluster binding site. A (2E)-4-hydroxy-3-methylbut-2-enyl diphosphate-binding site is contributed by H124. H124 is a binding site for dimethylallyl diphosphate. Residue H124 coordinates isopentenyl diphosphate. The active-site Proton donor is E126. T165 contributes to the (2E)-4-hydroxy-3-methylbut-2-enyl diphosphate binding site. Position 195 (C195) interacts with [4Fe-4S] cluster. 4 residues coordinate (2E)-4-hydroxy-3-methylbut-2-enyl diphosphate: S223, S224, N225, and S267. Positions 223, 224, 225, and 267 each coordinate dimethylallyl diphosphate. The isopentenyl diphosphate site is built by S223, S224, N225, and S267.

This sequence belongs to the IspH family. [4Fe-4S] cluster serves as cofactor.

The catalysed reaction is isopentenyl diphosphate + 2 oxidized [2Fe-2S]-[ferredoxin] + H2O = (2E)-4-hydroxy-3-methylbut-2-enyl diphosphate + 2 reduced [2Fe-2S]-[ferredoxin] + 2 H(+). It catalyses the reaction dimethylallyl diphosphate + 2 oxidized [2Fe-2S]-[ferredoxin] + H2O = (2E)-4-hydroxy-3-methylbut-2-enyl diphosphate + 2 reduced [2Fe-2S]-[ferredoxin] + 2 H(+). Its pathway is isoprenoid biosynthesis; dimethylallyl diphosphate biosynthesis; dimethylallyl diphosphate from (2E)-4-hydroxy-3-methylbutenyl diphosphate: step 1/1. It functions in the pathway isoprenoid biosynthesis; isopentenyl diphosphate biosynthesis via DXP pathway; isopentenyl diphosphate from 1-deoxy-D-xylulose 5-phosphate: step 6/6. In terms of biological role, catalyzes the conversion of 1-hydroxy-2-methyl-2-(E)-butenyl 4-diphosphate (HMBPP) into a mixture of isopentenyl diphosphate (IPP) and dimethylallyl diphosphate (DMAPP). Acts in the terminal step of the DOXP/MEP pathway for isoprenoid precursor biosynthesis. The protein is 4-hydroxy-3-methylbut-2-enyl diphosphate reductase of Acidithiobacillus ferrooxidans (strain ATCC 53993 / BNL-5-31) (Leptospirillum ferrooxidans (ATCC 53993)).